The primary structure comprises 1364 residues: Outer kinetochore KNL1 complex subunit spc7 (1364 aa).

Over residues 1-15 (MPTSPRRNSIATTDN) the composition is skewed to polar residues. Disordered stretches follow at residues 1–36 (MPTS…GALQ), 124–190 (YPKD…DIAS), and 202–223 (EALN…LSIQ). Residues 124–136 (YPKDHQSDSEKST) are compositionally biased toward basic and acidic residues. The span at 157–169 (GPTTTSFSRNETQ) shows a compositional bias: polar residues. Residues 170-181 (SSPHSHSASIIS) are compositionally biased toward low complexity. The MELT; degenerate signature appears at 254–257 (MDLT). A Phosphothreonine; by mph1 modification is found at Thr257. The tract at residues 289 to 334 (ASHDPSNQTQLSSPNKSSSPTSIEISDFSKNNENHDQSENKEEEED) is disordered. Over residues 300 to 310 (SSPNKSSSPTS) the composition is skewed to low complexity. Positions 318–328 (KNNENHDQSEN) are enriched in basic and acidic residues. Residues 450 to 453 (MDLT) carry the MELT; degenerate motif. Thr453 carries the phosphothreonine; by mph1 modification. The disordered stretch occupies residues 456 to 503 (ISSTNAPTHLNEDDLNQFTSNISSSSKPRKDNNKTANSSKPIPDSEDF). Positions 471-481 (NQFTSNISSSS) are enriched in polar residues. The MELT; degenerate signature appears at 504 to 507 (MDIT). Thr507 bears the Phosphothreonine; by mph1 mark. 2 disordered regions span residues 564–643 (LPSA…SSFD) and 697–837 (GATP…GVSN). Residues 566 to 585 (SADKENAEREEIPSYSDKSE) are compositionally biased toward basic and acidic residues. Residues 586–617 (NFNTTSFTNHERSPNGNNNLKFSKDPNSSSPS) show a composition bias toward polar residues. The segment covering 719-730 (EVSRQPTDDKGE) has biased composition (basic and acidic residues). The segment covering 747 to 773 (LTIQQTNEIKHVPTNTTSSVKLPQQPS) has biased composition (polar residues). The span at 791–802 (SLERLESQEPNR) shows a compositional bias: basic and acidic residues. Over residues 808-820 (VGSSNAGNTTSVG) the composition is skewed to polar residues. Residues 1075-1155 (LAQAQEKLEK…EEQLLNLKNE (81 aa)) adopt a coiled-coil conformation. The Nuclear localization signal signature appears at 1091–1105 (RRRRLLSEKEERRKE).

In terms of assembly, component of the KNL1/SPC105 complex composed of at least spc7 and sos7. Part of the outer kinetochore KMN network that includes the KNL1, MIS12 and NDC80 complexes. Interacts (via C-terminus) with sos7 (via C-terminus); the interaction is direct. Interacts (when phosphorylated on MELT motifs) with bub1 and bub3; to recruit the BUB1-BUB3 complex to the kinetochore. Post-translationally, phosphorylation of threonine residues in the MELT motifs by mph1/mps1 leads to recruitment of bub1 and bub3 to the kinetochore, and is required to maintain spindle assembly checkpoint signaling.

The protein localises to the nucleus. It is found in the chromosome. It localises to the centromere. Its subcellular location is the kinetochore. Its function is as follows. Acts as a component of the outer kinetochore KNL1 complex that serves as a docking point for spindle assembly checkpoint components and mediates microtubule-kinetochore interactions. Kinetochores, consisting of a centromere-associated inner segment and a microtubule-contacting outer segment, play a crucial role in chromosome segregation by mediating the physical connection between centromeric DNA and spindle microtubules. The outer kinetochore is made up of the ten-subunit KMN network, comprising the MIS12, NDC80 and KNL1 complexes, and auxiliary microtubule-associated components; together they connect the outer kinetochore with the inner kinetochore, bind microtubules, and mediate interactions with mitotic checkpoint proteins that delay anaphase until chromosomes are bioriented on the spindle. Recruits the BUB1-BUB3 complex to kinetochores when phosphorylated by mph1/mps1, to support spindle assembly checkpoint signaling. Functions both in mitotic and in meiotic chromosome segregation. This is Outer kinetochore KNL1 complex subunit spc7 from Schizosaccharomyces pombe (strain 972 / ATCC 24843) (Fission yeast).